Consider the following 281-residue polypeptide: Phosphatidylglycerol--prolipoprotein diacylglyceryl transferase (281 aa).

4 helical membrane passes run 23–43 (VGPL…MFAW), 71–91 (FVIW…VLFY), 107–127 (WDGG…MILF), and 133–153 (IKVW…LGVV). Arginine 154 lines the a 1,2-diacyl-sn-glycero-3-phospho-(1'-sn-glycerol) pocket. Transmembrane regions (helical) follow at residues 189 to 209 (LYEA…LVWV), 217 to 237 (GFIA…VEFF), and 247 to 267 (LFGG…LIGL).

The protein belongs to the Lgt family.

It localises to the cell inner membrane. It carries out the reaction L-cysteinyl-[prolipoprotein] + a 1,2-diacyl-sn-glycero-3-phospho-(1'-sn-glycerol) = an S-1,2-diacyl-sn-glyceryl-L-cysteinyl-[prolipoprotein] + sn-glycerol 1-phosphate + H(+). It functions in the pathway protein modification; lipoprotein biosynthesis (diacylglyceryl transfer). Its function is as follows. Catalyzes the transfer of the diacylglyceryl group from phosphatidylglycerol to the sulfhydryl group of the N-terminal cysteine of a prolipoprotein, the first step in the formation of mature lipoproteins. This is Phosphatidylglycerol--prolipoprotein diacylglyceryl transferase from Brucella anthropi (strain ATCC 49188 / DSM 6882 / CCUG 24695 / JCM 21032 / LMG 3331 / NBRC 15819 / NCTC 12168 / Alc 37) (Ochrobactrum anthropi).